The sequence spans 446 residues: Na(+)-translocating NADH-quinone reductase subunit A (446 aa).

Belongs to the NqrA family. As to quaternary structure, composed of six subunits; NqrA, NqrB, NqrC, NqrD, NqrE and NqrF.

It catalyses the reaction a ubiquinone + n Na(+)(in) + NADH + H(+) = a ubiquinol + n Na(+)(out) + NAD(+). In terms of biological role, NQR complex catalyzes the reduction of ubiquinone-1 to ubiquinol by two successive reactions, coupled with the transport of Na(+) ions from the cytoplasm to the periplasm. NqrA to NqrE are probably involved in the second step, the conversion of ubisemiquinone to ubiquinol. The chain is Na(+)-translocating NADH-quinone reductase subunit A from Aliivibrio salmonicida (strain LFI1238) (Vibrio salmonicida (strain LFI1238)).